Reading from the N-terminus, the 337-residue chain is DNA-directed RNA polymerase subunit alpha (337 aa).

Residues 1-233 (MVREKVTVST…DLFIPFLHAQ (233 aa)) are alpha N-terminal domain (alpha-NTD). Positions 267 to 337 (IALKYIFIDQ…FTVDLPKNKF (71 aa)) are alpha C-terminal domain (alpha-CTD).

It belongs to the RNA polymerase alpha chain family. As to quaternary structure, in plastids the minimal PEP RNA polymerase catalytic core is composed of four subunits: alpha, beta, beta', and beta''. When a (nuclear-encoded) sigma factor is associated with the core the holoenzyme is formed, which can initiate transcription.

It localises to the plastid. It is found in the chloroplast. It catalyses the reaction RNA(n) + a ribonucleoside 5'-triphosphate = RNA(n+1) + diphosphate. Functionally, DNA-dependent RNA polymerase catalyzes the transcription of DNA into RNA using the four ribonucleoside triphosphates as substrates. This chain is DNA-directed RNA polymerase subunit alpha, found in Platanus occidentalis (Sycamore).